Here is a 379-residue protein sequence, read N- to C-terminus: Quinolinate synthase (379 aa).

Iminosuccinate-binding residues include H60 and S81. C126 is a [4Fe-4S] cluster binding site. Residues 152-154 and S169 contribute to the iminosuccinate site; that span reads YAN. Position 213 (C213) interacts with [4Fe-4S] cluster. Iminosuccinate-binding positions include 239-241 and T256; that span reads HPE. C310 lines the [4Fe-4S] cluster pocket.

The protein belongs to the quinolinate synthase family. Type 1 subfamily. [4Fe-4S] cluster is required as a cofactor.

The protein localises to the cytoplasm. The catalysed reaction is iminosuccinate + dihydroxyacetone phosphate = quinolinate + phosphate + 2 H2O + H(+). It functions in the pathway cofactor biosynthesis; NAD(+) biosynthesis; quinolinate from iminoaspartate: step 1/1. Functionally, catalyzes the condensation of iminoaspartate with dihydroxyacetone phosphate to form quinolinate. In Herminiimonas arsenicoxydans, this protein is Quinolinate synthase.